We begin with the raw amino-acid sequence, 289 residues long: Protoheme IX farnesyltransferase 2 (289 aa).

Helical transmembrane passes span 1 to 21 (MIKP…FLLA), 28 to 48 (LTLM…GCGL), 76 to 96 (YSVL…LAIF), 100 to 120 (IALL…SLYM), 125 to 145 (VYGT…GYCA), 155 to 175 (VILL…IAIF), 199 to 219 (LHIV…PLAG), 221 to 241 (TGIA…GMAL), and 260 to 280 (CSIV…QLVV).

It belongs to the UbiA prenyltransferase family. Protoheme IX farnesyltransferase subfamily.

It is found in the cell inner membrane. The enzyme catalyses heme b + (2E,6E)-farnesyl diphosphate + H2O = Fe(II)-heme o + diphosphate. Its pathway is porphyrin-containing compound metabolism; heme O biosynthesis; heme O from protoheme: step 1/1. Functionally, converts heme B (protoheme IX) to heme O by substitution of the vinyl group on carbon 2 of heme B porphyrin ring with a hydroxyethyl farnesyl side group. This is Protoheme IX farnesyltransferase 2 from Shewanella woodyi (strain ATCC 51908 / MS32).